Here is a 114-residue protein sequence, read N- to C-terminus: Large ribosomal subunit protein uL22c (114 aa).

This sequence belongs to the universal ribosomal protein uL22 family. As to quaternary structure, part of the 50S ribosomal subunit.

It is found in the plastid. The protein localises to the chloroplast. Functionally, this protein binds specifically to 23S rRNA. In terms of biological role, the globular domain of the protein is located near the polypeptide exit tunnel on the outside of the subunit, while an extended beta-hairpin is found that lines the wall of the exit tunnel in the center of the 70S ribosome. The chain is Large ribosomal subunit protein uL22c (rpl22) from Gracilaria tenuistipitata (Red alga).